The chain runs to 201 residues: 3-isopropylmalate dehydratase small subunit (201 aa).

It belongs to the LeuD family. LeuD type 1 subfamily. As to quaternary structure, heterodimer of LeuC and LeuD.

It catalyses the reaction (2R,3S)-3-isopropylmalate = (2S)-2-isopropylmalate. It functions in the pathway amino-acid biosynthesis; L-leucine biosynthesis; L-leucine from 3-methyl-2-oxobutanoate: step 2/4. Its function is as follows. Catalyzes the isomerization between 2-isopropylmalate and 3-isopropylmalate, via the formation of 2-isopropylmaleate. This is 3-isopropylmalate dehydratase small subunit from Shewanella sp. (strain MR-7).